Here is a 343-residue protein sequence, read N- to C-terminus: Cytoplasmic tRNA 2-thiolation protein 1 (343 aa).

The protein belongs to the TtcA family. CTU1/NCS6/ATPBD3 subfamily.

Its subcellular location is the cytoplasm. The protein operates within tRNA modification; 5-methoxycarbonylmethyl-2-thiouridine-tRNA biosynthesis. Plays a central role in 2-thiolation of mcm(5)S(2)U at tRNA wobble positions of tRNA(Lys), tRNA(Glu) and tRNA(Gln). Directly binds tRNAs and probably acts by catalyzing adenylation of tRNAs, an intermediate required for 2-thiolation. It is unclear whether it acts as a sulfurtransferase that transfers sulfur from thiocarboxylated URM1 onto the uridine of tRNAs at wobble position. The polypeptide is Cytoplasmic tRNA 2-thiolation protein 1 (Drosophila yakuba (Fruit fly)).